Consider the following 263-residue polypeptide: Acyl-[acyl-carrier-protein]--UDP-N-acetylglucosamine O-acyltransferase (263 aa).

The protein belongs to the transferase hexapeptide repeat family. LpxA subfamily. As to quaternary structure, homotrimer.

The protein localises to the cytoplasm. The enzyme catalyses a (3R)-hydroxyacyl-[ACP] + UDP-N-acetyl-alpha-D-glucosamine = a UDP-3-O-[(3R)-3-hydroxyacyl]-N-acetyl-alpha-D-glucosamine + holo-[ACP]. It participates in glycolipid biosynthesis; lipid IV(A) biosynthesis; lipid IV(A) from (3R)-3-hydroxytetradecanoyl-[acyl-carrier-protein] and UDP-N-acetyl-alpha-D-glucosamine: step 1/6. Its function is as follows. Involved in the biosynthesis of lipid A, a phosphorylated glycolipid that anchors the lipopolysaccharide to the outer membrane of the cell. In Caulobacter vibrioides (strain ATCC 19089 / CIP 103742 / CB 15) (Caulobacter crescentus), this protein is Acyl-[acyl-carrier-protein]--UDP-N-acetylglucosamine O-acyltransferase.